The following is a 156-amino-acid chain: Endoribonuclease YbeY (156 aa).

3 residues coordinate Zn(2+): H122, H126, and H132.

Belongs to the endoribonuclease YbeY family. The cofactor is Zn(2+).

Its subcellular location is the cytoplasm. Single strand-specific metallo-endoribonuclease involved in late-stage 70S ribosome quality control and in maturation of the 3' terminus of the 16S rRNA. This is Endoribonuclease YbeY from Bacillus cereus (strain ZK / E33L).